The sequence spans 266 residues: L-aspartate dehydrogenase (266 aa).

Residues Ala-123 and Asn-189 each contribute to the NAD(+) site. The active site involves His-219.

The protein belongs to the L-aspartate dehydrogenase family.

It carries out the reaction L-aspartate + NADP(+) + H2O = oxaloacetate + NH4(+) + NADPH + H(+). The catalysed reaction is L-aspartate + NAD(+) + H2O = oxaloacetate + NH4(+) + NADH + H(+). It functions in the pathway cofactor biosynthesis; NAD(+) biosynthesis; iminoaspartate from L-aspartate (dehydrogenase route): step 1/1. Its function is as follows. Specifically catalyzes the NAD or NADP-dependent dehydrogenation of L-aspartate to iminoaspartate. This Cupriavidus taiwanensis (strain DSM 17343 / BCRC 17206 / CCUG 44338 / CIP 107171 / LMG 19424 / R1) (Ralstonia taiwanensis (strain LMG 19424)) protein is L-aspartate dehydrogenase.